Consider the following 253-residue polypeptide: Adenosylcobinamide-GDP ribazoletransferase (253 aa).

4 consecutive transmembrane segments (helical) span residues 33-53, 106-126, 132-152, and 178-198; these read ISPL…YVLL, IGSG…VALL, FYTI…GLYI, and VLLL…FLVF.

Belongs to the CobS family. Mg(2+) serves as cofactor.

It localises to the cell membrane. The catalysed reaction is alpha-ribazole + adenosylcob(III)inamide-GDP = adenosylcob(III)alamin + GMP + H(+). It catalyses the reaction alpha-ribazole 5'-phosphate + adenosylcob(III)inamide-GDP = adenosylcob(III)alamin 5'-phosphate + GMP + H(+). It functions in the pathway cofactor biosynthesis; adenosylcobalamin biosynthesis; adenosylcobalamin from cob(II)yrinate a,c-diamide: step 7/7. Joins adenosylcobinamide-GDP and alpha-ribazole to generate adenosylcobalamin (Ado-cobalamin). Also synthesizes adenosylcobalamin 5'-phosphate from adenosylcobinamide-GDP and alpha-ribazole 5'-phosphate. This chain is Adenosylcobinamide-GDP ribazoletransferase, found in Saccharolobus islandicus (strain Y.G.57.14 / Yellowstone #1) (Sulfolobus islandicus).